A 642-amino-acid polypeptide reads, in one-letter code: Threonine--tRNA ligase (642 aa).

Residues 1-61 (MPVITLPDGS…ENDAQLSIIT (61 aa)) enclose the TGS domain. Residues 243-534 (DHRKIGKQLD…LTEEFAGFFP (292 aa)) are catalytic. The Zn(2+) site is built by C334, H385, and H511.

Belongs to the class-II aminoacyl-tRNA synthetase family. In terms of assembly, homodimer. It depends on Zn(2+) as a cofactor.

It is found in the cytoplasm. It catalyses the reaction tRNA(Thr) + L-threonine + ATP = L-threonyl-tRNA(Thr) + AMP + diphosphate + H(+). Catalyzes the attachment of threonine to tRNA(Thr) in a two-step reaction: L-threonine is first activated by ATP to form Thr-AMP and then transferred to the acceptor end of tRNA(Thr). Also edits incorrectly charged L-seryl-tRNA(Thr). This chain is Threonine--tRNA ligase, found in Enterobacter sp. (strain 638).